Consider the following 329-residue polypeptide: Cytosolic Fe-S cluster assembly factor NBP35 (329 aa).

The interval 1 to 33 (MAPSQVEDISKTELETPEHCPGPESEQAGKEDA) is disordered. Residues 8–18 (DISKTELETPE) are compositionally biased toward basic and acidic residues. Residues cysteine 20, cysteine 34, cysteine 37, and cysteine 43 each contribute to the [4Fe-4S] cluster site. Residue 74–81 (GKGGVGKS) coordinates ATP. [4Fe-4S] cluster-binding residues include cysteine 248 and cysteine 251.

Belongs to the Mrp/NBP35 ATP-binding proteins family. NUBP1/NBP35 subfamily. As to quaternary structure, heterotetramer of 2 NBP35 and 2 CFD1 chains. Requires [4Fe-4S] cluster as cofactor.

The protein localises to the cytoplasm. The protein resides in the nucleus. Functionally, component of the cytosolic iron-sulfur (Fe/S) protein assembly (CIA) machinery. Required for maturation of extramitochondrial Fe-S proteins. The NBP35-CFD1 heterotetramer forms a Fe-S scaffold complex, mediating the de novo assembly of an Fe-S cluster and its transfer to target apoproteins. Required for biogenesis and export of both ribosomal subunits, which may reflect a role in assembly of the Fe/S clusters in RLI1, a protein which performs rRNA processing and ribosome export. The protein is Cytosolic Fe-S cluster assembly factor NBP35 of Debaryomyces hansenii (strain ATCC 36239 / CBS 767 / BCRC 21394 / JCM 1990 / NBRC 0083 / IGC 2968) (Yeast).